The sequence spans 285 residues: Glutamate racemase (285 aa).

Substrate contacts are provided by residues 28 to 29 (DS) and 60 to 61 (YG). The active-site Proton donor/acceptor is cysteine 92. 93 to 94 (NT) contributes to the substrate binding site. Cysteine 204 (proton donor/acceptor) is an active-site residue. 205 to 206 (TH) lines the substrate pocket.

It belongs to the aspartate/glutamate racemases family.

It catalyses the reaction L-glutamate = D-glutamate. The protein operates within cell wall biogenesis; peptidoglycan biosynthesis. Provides the (R)-glutamate required for cell wall biosynthesis. This is Glutamate racemase from Escherichia coli (strain UTI89 / UPEC).